The chain runs to 373 residues: MSANDRRDRRVRVAVVFGGRSNEHAISCVSAGSILRNLDSRRFDVIAVGITPAGSWVLTDANPDALTITNRELPQVKSGSGTELALPADPRRGGQLVSLPPGAGEVLESVDVVFPVLHGPYGEDGTIQGLLELAGVPYVGAGVLASAVGMDKEFTKKLLAADGLPVGAYAVLRPPRSTLHRQECERLGLPVFVKPARGGSSIGVSRVSSWDQLPAAVARARRHDPKVIVEAAISGRELECGVLEMPDGTLEASTLGEIRVAGVRGREDSFYDFATKYLDDAAELDVPAKVDDQVAEAIRQLAIRAFAAIDCRGLARVDFFLTDDGPVINEINTMPGFTTISMYPRMWAASGVDYPTLLATMIETTLARGVGLH.

Residues 156–363 (KKLLAADGLP…YPTLLATMIE (208 aa)) form the ATP-grasp domain. 184-239 (CERLGLPVFVKPARGGSSIGVSRVSSWDQLPAAVARARRHDPKVIVEAAISGRELE) contacts ATP. Mg(2+) contacts are provided by Asp-318, Glu-330, and Asn-332.

This sequence belongs to the D-alanine--D-alanine ligase family. Requires Mg(2+) as cofactor. Mn(2+) serves as cofactor.

The protein localises to the cytoplasm. The catalysed reaction is 2 D-alanine + ATP = D-alanyl-D-alanine + ADP + phosphate + H(+). Its pathway is cell wall biogenesis; peptidoglycan biosynthesis. Its function is as follows. Cell wall formation. This chain is D-alanine--D-alanine ligase, found in Mycobacterium tuberculosis (strain ATCC 25177 / H37Ra).